The primary structure comprises 887 residues: Phosphatidylinositol 3-kinase catalytic subunit type 3 (887 aa).

Residues 35–184 form the C2 PI3K-type domain; it reads YKAVLEDPML…LAKLTKAHRQ (150 aa). The disordered stretch occupies residues 149–170; sequence VEADGSEPTRTPGRTSSTLSED. Positions 156–170 are enriched in polar residues; sequence PTRTPGRTSSTLSED. Residue T163 is modified to Phosphothreonine; by AMPK. Position 165 is a phosphoserine; by AMPK (S165). Phosphoserine occurs at positions 244, 261, and 282. Residues 283–520 form the PIK helical domain; that stretch reads DHDLKPNATT…PKTHEMYLNV (238 aa). Residues 416–467 form a disordered region; that stretch reads EPTKKDSQASVSESLSSSGVSSADIDSSQIITNPLPPVASPPPASKSKEVSD. Residues 423 to 444 are compositionally biased toward low complexity; sequence QASVSESLSSSGVSSADIDSSQ. Residues 449 to 459 show a composition bias toward pro residues; it reads PLPPVASPPPA. One can recognise a PI3K/PI4K catalytic domain in the interval 605-871; it reads IPETATLFKS…LIDESVHALF (267 aa). The tract at residues 611–617 is G-loop; sequence LFKSALM. The catalytic loop stretch occupies residues 740 to 748; sequence GVGDRHLDN. Positions 759 to 780 are activation loop; it reads HIDFGYILGRDPKPLPPPMKLN.

It belongs to the PI3/PI4-kinase family. As to quaternary structure, component of the PI3K (PI3KC3/PI3K-III/class III phosphatidylinositol 3-kinase) complex the core of which is composed of the catalytic subunit PIK3C3, the regulatory subunit PIK3R4 and BECN1 associating with additional regulatory/auxiliary subunits to form alternative complex forms. Alternative complex forms containing a fourth regulatory subunit in a mutually exclusive manner are: the PI3K complex I (PI3KC3-C1) containing ATG14, and the PI3K complex II (PI3KC3-C2) containing UVRAG. PI3KC3-C1 displays a V-shaped architecture with PIK3R4 serving as a bridge between PIK3C3 and the ATG14:BECN1 subcomplex. Both, PI3KC3-C1 and PI3KC3-C2, can associate with further regulatory subunits such as RUBCN, SH3GLB1/Bif-1 and AMBRA1. PI3KC3-C1 probably associates with PIK3CB. Interacts with RAB7A in the presence of PIK3R4. Interacts with AMBRA1. Interacts with BECN1P1/BECN2. Interacts with SLAMF1. May interact with DYN2. May be a component of a complex composed of RAB5A (in GDP-bound form), DYN2 and PIK3C3. Interacts with NCKAP1L. Interacts with ATG14; this interaction is increased in the absence of TMEM39A. Interacts with STEEP1; the interaction is STING1-dependent and required for trafficking of STING1 from the endoplasmic reticulum. Interacts with YWHAG. Interacts with ARMC3. Mn(2+) is required as a cofactor. In terms of processing, ubiquitinated via 'Lys-29'- and 'Lys-48'-linked ubiquitination by UBE3C, promoting its degradation. Deubiquitination by ZRANB1/TRABID promotes its stabilization, leading to autophagosome maturation.

The protein localises to the midbody. It localises to the late endosome. Its subcellular location is the cytoplasmic vesicle. It is found in the autophagosome. It carries out the reaction a 1,2-diacyl-sn-glycero-3-phospho-(1D-myo-inositol) + ATP = a 1,2-diacyl-sn-glycero-3-phospho-(1D-myo-inositol-3-phosphate) + ADP + H(+). Catalytic subunit of the PI3K complex that mediates formation of phosphatidylinositol 3-phosphate; different complex forms are believed to play a role in multiple membrane trafficking pathways: PI3KC3-C1 is involved in initiation of autophagosomes and PI3KC3-C2 in maturation of autophagosomes and endocytosis. As part of PI3KC3-C1, promotes endoplasmic reticulum membrane curvature formation prior to vesicle budding. Involved in regulation of degradative endocytic trafficking and required for the abscission step in cytokinesis, probably in the context of PI3KC3-C2. Involved in the transport of lysosomal enzyme precursors to lysosomes. Required for transport from early to late endosomes. In Rattus norvegicus (Rat), this protein is Phosphatidylinositol 3-kinase catalytic subunit type 3.